Consider the following 258-residue polypeptide: uncharacterized protein (258 aa).

Residues 1-19 form the signal peptide; the sequence is MRKIFLPLLLVALSPVAHS.

This is an uncharacterized protein from Escherichia coli (strain K12).